A 152-amino-acid polypeptide reads, in one-letter code: Large ribosomal subunit protein bL17 (152 aa).

The disordered stretch occupies residues 121 to 140; the sequence is APSASQKTGKQDRAKRVKGS.

Belongs to the bacterial ribosomal protein bL17 family. As to quaternary structure, part of the 50S ribosomal subunit. Contacts protein L32.

In Pelodictyon phaeoclathratiforme (strain DSM 5477 / BU-1), this protein is Large ribosomal subunit protein bL17.